The sequence spans 56 residues: Large ribosomal subunit protein bL33 (56 aa).

This sequence belongs to the bacterial ribosomal protein bL33 family.

The chain is Large ribosomal subunit protein bL33 from Nocardioides sp. (strain ATCC BAA-499 / JS614).